A 684-amino-acid polypeptide reads, in one-letter code: Histone-lysine N-methyltransferase SETMAR (684 aa).

The segment at 1-345 (MFAEAAKTTR…RLTLETMKMM (345 aa)) is histone-lysine N-methyltransferase. The Pre-SET domain maps to 73–136 (PGCICVKTPC…HCRNRVVQKG (64 aa)). Cys-75, Cys-77, Cys-82, Cys-87, Cys-89, Cys-118, Cys-122, Cys-124, and Cys-128 together coordinate Zn(2+). The SET domain maps to 139–263 (FHFQVFKTHK…PEEELSYDYS (125 aa)). Residues 149 to 151 (KGW), Tyr-192, Arg-220, and 223 to 224 (NH) each bind S-adenosyl-L-methionine. Zn(2+) is bound by residues Cys-226, Cys-287, Cys-289, and Cys-294. Positions 283-299 (LRKPCYCGAKSCTAFLP) constitute a Post-SET domain. The segment at 346–684 (LDKKQIRAIF…CVDCNGSYFD (339 aa)) is mariner transposase Hsmar1. 2 DNA-binding regions (H-T-H motif) span residues 364-395 (KAAE…KFCK) and 428-448 (TTRE…RHLK). Asp-496 is a Mg(2+) binding site. Lys-498 bears the N6-methyllysine mark. Position 508 is a phosphoserine; by CHEK1 (Ser-508). Asp-588 lines the Mg(2+) pocket.

This sequence in the N-terminal section; belongs to the class V-like SAM-binding methyltransferase superfamily. In the C-terminal section; belongs to the mariner transposase family. In terms of assembly, homodimer. Interacts with PRPF19; required for SETMAR recruitment to damaged DNA sites. Interacts with PCNA. Interacts with TOP2A; stimulates TOP2A topoisomerase activity. May interact with RAD9A and/or RAD9B. Mg(2+) is required as a cofactor. Post-translationally, methylated. Methylation regulates activity in DNA decatenation. In terms of processing, phosphorylated at Ser-508 by CHEK1 and dephosphorylated by protein phosphatase 2A/PP2A. Phosphorylation at Ser-508 is enhanced by DNA damage and promotes recruitment to damaged DNA. It stimulates DNA repair and impairs replication fork restart. As to expression, widely expressed, with highest expression in placenta and ovary and lowest expression in skeletal muscle.

The protein localises to the nucleus. The protein resides in the chromosome. The enzyme catalyses L-lysyl(36)-[histone H3] + 2 S-adenosyl-L-methionine = N(6),N(6)-dimethyl-L-lysyl(36)-[histone H3] + 2 S-adenosyl-L-homocysteine + 2 H(+). Functionally, protein derived from the fusion of a methylase with the transposase of an Hsmar1 transposon that plays a role in DNA double-strand break repair, stalled replication fork restart and DNA integration. DNA-binding protein, it is indirectly recruited to sites of DNA damage through protein-protein interactions. Also has kept a sequence-specific DNA-binding activity recognizing the 19-mer core of the 5'-terminal inverted repeats (TIRs) of the Hsmar1 element and displays a DNA nicking and end joining activity. In parallel, has a histone methyltransferase activity and methylates 'Lys-4' and 'Lys-36' of histone H3. Specifically mediates dimethylation of H3 'Lys-36' at sites of DNA double-strand break and may recruit proteins required for efficient DSB repair through non-homologous end-joining. Also regulates replication fork processing, promoting replication fork restart and regulating DNA decatenation through stimulation of the topoisomerase activity of TOP2A. This is Histone-lysine N-methyltransferase SETMAR from Homo sapiens (Human).